A 107-amino-acid polypeptide reads, in one-letter code: MGDSVLSAIQQTITQRKSANPSESYVAQLLHKGEDKILKKVIEEAGEVLMASKDKNPSHLVYEVADLWFHTMILLTHHDLKAEDVLDELARRQGLSGLVEKAARTES.

The protein belongs to the PRA-PH family.

The protein resides in the cytoplasm. The enzyme catalyses 1-(5-phospho-beta-D-ribosyl)-ATP + H2O = 1-(5-phospho-beta-D-ribosyl)-5'-AMP + diphosphate + H(+). The protein operates within amino-acid biosynthesis; L-histidine biosynthesis; L-histidine from 5-phospho-alpha-D-ribose 1-diphosphate: step 2/9. This Neisseria meningitidis serogroup B (strain ATCC BAA-335 / MC58) protein is Phosphoribosyl-ATP pyrophosphatase (hisE).